The chain runs to 155 residues: SsrA-binding protein (155 aa).

It belongs to the SmpB family.

The protein localises to the cytoplasm. In terms of biological role, required for rescue of stalled ribosomes mediated by trans-translation. Binds to transfer-messenger RNA (tmRNA), required for stable association of tmRNA with ribosomes. tmRNA and SmpB together mimic tRNA shape, replacing the anticodon stem-loop with SmpB. tmRNA is encoded by the ssrA gene; the 2 termini fold to resemble tRNA(Ala) and it encodes a 'tag peptide', a short internal open reading frame. During trans-translation Ala-aminoacylated tmRNA acts like a tRNA, entering the A-site of stalled ribosomes, displacing the stalled mRNA. The ribosome then switches to translate the ORF on the tmRNA; the nascent peptide is terminated with the 'tag peptide' encoded by the tmRNA and targeted for degradation. The ribosome is freed to recommence translation, which seems to be the essential function of trans-translation. This is SsrA-binding protein from Bacillus cereus (strain G9842).